Reading from the N-terminus, the 338-residue chain is Eukaryotic translation initiation factor 3 subunit H (338 aa).

An MPN domain is found at Val-22–Ala-154.

The protein belongs to the eIF-3 subunit H family. As to quaternary structure, component of the eukaryotic translation initiation factor 3 (eIF-3) complex. The eIF-3 complex interacts with pix. Interacts with mxt.

It is found in the cytoplasm. In terms of biological role, component of the eukaryotic translation initiation factor 3 (eIF-3) complex, which is involved in protein synthesis of a specialized repertoire of mRNAs and, together with other initiation factors, stimulates binding of mRNA and methionyl-tRNAi to the 40S ribosome. The eIF-3 complex specifically targets and initiates translation of a subset of mRNAs involved in cell proliferation. This Drosophila yakuba (Fruit fly) protein is Eukaryotic translation initiation factor 3 subunit H.